Reading from the N-terminus, the 368-residue chain is MTRLIVTTGGTGGHIFPALAVAEAAMRLSPGLDVLFIGGAGPEGELAAKAGLPFVALPAKGVFGRGIKALAAPFWMLRAFGLAGARIREFSPDVVCGFGGYAGFIPVAAARLMGVPTAIHEQNSVPGVTNKVLGRFVDRVFTTYPDEGGVFPATRTKRLGNPIRADIARAASAAPHPGTKRLLVLGGSQGAKAINDAVMAILPTLLDAGVKVRLQAGRADFERVTTQAHAVLAGREAKGDEPEVVIENFIDDMAAAYAWADLVLARAGATTLAEVTAAGKPSLLIPFPFATHDHQTVNAAFLARAGAAQSVAQNHLPGLDLAGTVIGLLGDPARLEAMGQAALGQALPHAADDIARALLAMAAHKGER.

Residues 11–13 (TGG), asparagine 123, arginine 164, serine 188, isoleucine 250, and glutamine 295 each bind UDP-N-acetyl-alpha-D-glucosamine.

It belongs to the glycosyltransferase 28 family. MurG subfamily.

Its subcellular location is the cell inner membrane. It catalyses the reaction di-trans,octa-cis-undecaprenyl diphospho-N-acetyl-alpha-D-muramoyl-L-alanyl-D-glutamyl-meso-2,6-diaminopimeloyl-D-alanyl-D-alanine + UDP-N-acetyl-alpha-D-glucosamine = di-trans,octa-cis-undecaprenyl diphospho-[N-acetyl-alpha-D-glucosaminyl-(1-&gt;4)]-N-acetyl-alpha-D-muramoyl-L-alanyl-D-glutamyl-meso-2,6-diaminopimeloyl-D-alanyl-D-alanine + UDP + H(+). It participates in cell wall biogenesis; peptidoglycan biosynthesis. Cell wall formation. Catalyzes the transfer of a GlcNAc subunit on undecaprenyl-pyrophosphoryl-MurNAc-pentapeptide (lipid intermediate I) to form undecaprenyl-pyrophosphoryl-MurNAc-(pentapeptide)GlcNAc (lipid intermediate II). The chain is UDP-N-acetylglucosamine--N-acetylmuramyl-(pentapeptide) pyrophosphoryl-undecaprenol N-acetylglucosamine transferase from Solidesulfovibrio magneticus (strain ATCC 700980 / DSM 13731 / RS-1) (Desulfovibrio magneticus).